Reading from the N-terminus, the 175-residue chain is ATP synthase subunit delta (175 aa).

The protein belongs to the ATPase delta chain family. As to quaternary structure, F-type ATPases have 2 components, F(1) - the catalytic core - and F(0) - the membrane proton channel. F(1) has five subunits: alpha(3), beta(3), gamma(1), delta(1), epsilon(1). F(0) has three main subunits: a(1), b(2) and c(10-14). The alpha and beta chains form an alternating ring which encloses part of the gamma chain. F(1) is attached to F(0) by a central stalk formed by the gamma and epsilon chains, while a peripheral stalk is formed by the delta and b chains.

It is found in the cell membrane. F(1)F(0) ATP synthase produces ATP from ADP in the presence of a proton or sodium gradient. F-type ATPases consist of two structural domains, F(1) containing the extramembraneous catalytic core and F(0) containing the membrane proton channel, linked together by a central stalk and a peripheral stalk. During catalysis, ATP synthesis in the catalytic domain of F(1) is coupled via a rotary mechanism of the central stalk subunits to proton translocation. Functionally, this protein is part of the stalk that links CF(0) to CF(1). It either transmits conformational changes from CF(0) to CF(1) or is implicated in proton conduction. The protein is ATP synthase subunit delta of Stenotrophomonas maltophilia (strain K279a).